The sequence spans 458 residues: Protein amnionless (458 aa).

The first 19 residues, 1-19 (MGALGRVLLWLQLCAMTRA), serve as a signal peptide directing secretion. Residues 20-362 (AYKLWVPNTS…ELNQSSSGAG (343 aa)) are Extracellular-facing. Residue N27 is glycosylated (N-linked (GlcNAc...) asparagine). Intrachain disulfides connect C43-C96, C137-C213, C205-C211, C223-C249, C234-C250, and C239-C253. The segment at 67 to 87 (SDMLLPLDGELVLASGAALSA) is interaction with CUBN. Positions 203–254 (QACTDASGCVCGNAEMLPWICASLLQPLGGRCPQAACQDPLLPQGQCCDLCG) constitute a VWFC domain. Residue N355 is glycosylated (N-linked (GlcNAc...) asparagine). The chain crosses the membrane as a helical span at residues 363-383 (LAGGVAALVLLALLGTVLLLL). Topologically, residues 384 to 458 (HRSGRLRWRR…LFAGEAEAEA (75 aa)) are cytoplasmic.

In terms of assembly, interacts (via extracellular region) with CUBN/cubilin. This gives rise to a huge complex containing one AMN chain and three CUBN chains. N-glycosylated. In terms of processing, a soluble form arises by proteolytic removal of the membrane anchor. As to expression, expressed in polarized epithelial cells which are specialized in resorption or transport, specifically kidney proximal tubules and intestinal epithelium.

The protein localises to the apical cell membrane. Its subcellular location is the cell membrane. It is found in the endosome membrane. It localises to the membrane. The protein resides in the coated pit. Functionally, membrane-bound component of the endocytic receptor formed by AMN and CUBN. Required for normal CUBN glycosylation and trafficking to the cell surface. The complex formed by AMN and CUBN is required for efficient absorption of vitamin B12. Required for normal CUBN-mediated protein transport in the kidney. The chain is Protein amnionless (Amn) from Mus musculus (Mouse).